A 100-amino-acid chain; its full sequence is Urease subunit gamma (100 aa).

It belongs to the urease gamma subunit family. As to quaternary structure, heterotrimer of UreA (gamma), UreB (beta) and UreC (alpha) subunits. Three heterotrimers associate to form the active enzyme.

Its subcellular location is the cytoplasm. It carries out the reaction urea + 2 H2O + H(+) = hydrogencarbonate + 2 NH4(+). It participates in nitrogen metabolism; urea degradation; CO(2) and NH(3) from urea (urease route): step 1/1. The protein is Urease subunit gamma of Bordetella pertussis (strain Tohama I / ATCC BAA-589 / NCTC 13251).